Here is a 326-residue protein sequence, read N- to C-terminus: Small ribosomal subunit protein RACK1x (326 aa).

7 WD repeats span residues 13 to 53, 61 to 100, 103 to 142, 147 to 188, 191 to 230, 232 to 270, and 290 to 326; these read AHTD…KSYG, GHSH…TTRR, GHTK…KYTI, GHKE…LRNS, GHSG…KLYS, EAGS…VVED, and NQKK…IGRY.

Belongs to the WD repeat G protein beta family. Ribosomal protein RACK1 subfamily. Homodimer and heterodimer with RACK1A or RACK1B. Interacts with GB1, MEKK1, MKK4, MKK5, MPK3 and MPK6, but not with GPA1 or MPK4. Widely expressed.

In terms of biological role, minor component of the RACK1 regulatory proteins that play a role in multiple signal transduction pathways. Involved in multiple hormone responses and developmental processes. MAPK cascade scaffolding protein involved in the protease IV and ArgC signaling pathway but not the flg22 pathway. The sequence is that of Small ribosomal subunit protein RACK1x from Arabidopsis thaliana (Mouse-ear cress).